Consider the following 188-residue polypeptide: MKHKVGILGGTFDPPHLAHLRMAEEAKKQLGLEKILFLPNKIPPHKHISGMASNDERVEMLQLMIEGIDSFEIDTRELMRAGKSYTYDTMRDMISEQPDTDFYFIIGGDMVEYLPKWYHIDDLVKMVTFVGVNRPSYQTEVPYDIVKINMPETTISSTEIRNNIENASTFLPEKVWSYIKEHQLYGKK.

The protein belongs to the NadD family.

The catalysed reaction is nicotinate beta-D-ribonucleotide + ATP + H(+) = deamido-NAD(+) + diphosphate. It functions in the pathway cofactor biosynthesis; NAD(+) biosynthesis; deamido-NAD(+) from nicotinate D-ribonucleotide: step 1/1. Functionally, catalyzes the reversible adenylation of nicotinate mononucleotide (NaMN) to nicotinic acid adenine dinucleotide (NaAD). In Listeria monocytogenes serotype 4b (strain F2365), this protein is Probable nicotinate-nucleotide adenylyltransferase.